The following is a 123-amino-acid chain: DNA-directed RNA polymerase I subunit RPA12 (123 aa).

6 residues coordinate Zn(2+): Cys17, Cys20, Cys35, Cys38, Cys84, and Cys87. The C4-type zinc finger occupies 17-38 (CPDCGSVLPLPGVQDTVICPRC). The segment at 80-120 (VDRRCSRCGHEGMAYYTRQMRSADEGQTVFYTCINCKFQEK) adopts a TFIIS-type zinc-finger fold. Residues 103 to 104 (DE) carry the Hairpin motif. Zn(2+) contacts are provided by Cys112 and Cys115.

It belongs to the archaeal RpoM/eukaryotic RPA12/RPB9/RPC11 RNA polymerase family. As to quaternary structure, component of the RNA polymerase I (Pol I) complex consisting of 13 subunits: a ten-subunit catalytic core composed of POLR1A/RPA1, POLR1B/RPA2, POLR1C/RPAC1, POLR1D/RPAC2, POLR1H/RPA12, POLR2E/RPABC1, POLR2F/RPABC2, POLR2H/RPABC3, POLR2K/RPABC4 and POLR2L/RPABC5; a mobile stalk subunit POLR1F/RPA43 protruding from the core and additional subunits homologous to general transcription factors POLR1E/RPA49 and POLR1G/RPA34. Part of Pol I pre-initiation complex (PIC), in which Pol I core assembles with RRN3 and promoter-bound UTBF and SL1/TIF-IB complex.

The protein localises to the nucleus. It is found in the nucleolus. In terms of biological role, core component of RNA polymerase I (Pol I), a DNA-dependent RNA polymerase which synthesizes ribosomal RNA precursors using the four ribonucleoside triphosphates as substrates. Can mediate Pol I proofreading of the nascent RNA transcript. Anchors into the Pol I active site to monitor transcription fidelity and cleave mis-incorporated 5'-ribonucleotides. The sequence is that of DNA-directed RNA polymerase I subunit RPA12 from Rattus norvegicus (Rat).